Here is a 215-residue protein sequence, read N- to C-terminus: MYGKSPTRAVLFLLGLQLTALWPTAAVEIYTPRVLEAVNGTDVRLKCTFSSFAPVGDALTVTWNFRPRDGGPEQFVFYYHVDPFKPMSGRFKDRVAWDGNPERYDVSILLWKLQFDDNGTYTCQVKNPPDVDGLIGEIQLSVVQTVRFSEIHFLALAIGSACALMVIIVIVVVLFQHFRKKRRAERAHRVVEIKSKEEEKLNQEKKASVSLEYTD.

An N-terminal signal peptide occupies residues 1-26 (MYGKSPTRAVLFLLGLQLTALWPTAA). Positions 27 to 141 (VEIYTPRVLE…DGLIGEIQLS (115 aa)) constitute an Ig-like V-type domain. The Extracellular segment spans residues 27–154 (VEIYTPRVLE…TVRFSEIHFL (128 aa)). N-linked (GlcNAc...) asparagine glycosylation is found at N39 and N118. A disulfide bridge links C47 with C123. Residues 155-175 (ALAIGSACALMVIIVIVVVLF) traverse the membrane as a helical segment. At 176-215 (QHFRKKRRAERAHRVVEIKSKEEEKLNQEKKASVSLEYTD) the chain is on the cytoplasmic side.

This sequence belongs to the myelin P0 protein family.

Its subcellular location is the membrane. Its function is as follows. Mediates homophilic cell-cell adhesion. This Bos taurus (Bovine) protein is Myelin protein zero-like protein 2 (MPZL2).